The following is a 302-amino-acid chain: Plant UBX domain-containing protein 3 (302 aa).

Disordered regions lie at residues 1–64 (MSSK…PKHD) and 79–98 (VEGP…TGRL). The SEP domain occupies 113–177 (PVIHNIIFWS…NLMRRDEKCP (65 aa)). The UBX domain maps to 224–301 (ETLPSTSIQL…GLASSVVIQK (78 aa)).

In terms of assembly, interacts with CDC48A.

The chain is Plant UBX domain-containing protein 3 from Arabidopsis thaliana (Mouse-ear cress).